A 100-amino-acid chain; its full sequence is Cytochrome b (100 aa).

The next 3 helical transmembrane spans lie at 1 to 21 (MGSL…FLAM), 45 to 66 (WLIR…YLHI), and 81 to 100 (WNIG…VGYV). Heme b-binding residues include His51 and His65.

Belongs to the cytochrome b family. The cytochrome bc1 complex contains 3 respiratory subunits (MT-CYB, CYC1 and UQCRFS1), 2 core proteins (UQCRC1 and UQCRC2) and probably 6 low-molecular weight proteins. Heme b serves as cofactor.

The protein localises to the mitochondrion inner membrane. Its function is as follows. Component of the ubiquinol-cytochrome c reductase complex (complex III or cytochrome b-c1 complex) that is part of the mitochondrial respiratory chain. The b-c1 complex mediates electron transfer from ubiquinol to cytochrome c. Contributes to the generation of a proton gradient across the mitochondrial membrane that is then used for ATP synthesis. This is Cytochrome b (mt-cyb) from Polypterus sp. (Bichir).